Consider the following 1048-residue polypeptide: FHIP family protein GJ17503 (1048 aa).

Over residues 1–15 (MSWLRTSPLRQSLTR) the composition is skewed to polar residues. Positions 1 to 32 (MSWLRTSPLRQSLTRNSGSSGSGNSSATTTLR) are disordered. The span at 16–26 (NSGSSGSGNSS) shows a compositional bias: low complexity. Residue S500 is modified to Phosphoserine. 3 disordered regions span residues 652 to 675 (TTTA…GRRD), 813 to 871 (APMH…KRRS), and 924 to 984 (ARGA…ESGL). The span at 816–838 (HQQHQQQQLQHTTNPTQQQQAQQ) shows a compositional bias: low complexity. Polar residues-rich tracts occupy residues 839–857 (RSTY…SPTS) and 929–954 (QEQS…TAVV). The segment covering 955-978 (SSSNSSIGGSTQTLSATHSSSTLH) has biased composition (low complexity).

It belongs to the FHIP family.

The polypeptide is FHIP family protein GJ17503 (Drosophila virilis (Fruit fly)).